We begin with the raw amino-acid sequence, 456 residues long: Equilibrative nucleoside transporter 2 (456 aa).

The helical transmembrane segment at 13–33 (LVGISFFILGLGTLLPWNFFI) threads the bilayer. An N-linked (GlcNAc...) asparagine glycan is attached at Asn-56. The next 5 membrane-spanning stretches (helical) occupy residues 69–89 (WVTL…SFLY), 98–118 (ILGS…LVKV), 123–143 (GLFF…CAVL), 161–181 (LFLS…LMSL), and 192–212 (LGYF…YLSL). The segment at 248-277 (GVPISPQQASPTLDLDPEKEPEPEEPQKPG) is disordered. Ser-252 carries the post-translational modification Phosphoserine. Residues 263–275 (DPEKEPEPEEPQK) show a composition bias toward basic and acidic residues. 5 helical membrane passes run 288-308 (IWLT…VFPA), 323-343 (WGLF…DWLG), 360-380 (LLPL…LCHV), 396-416 (FITF…LTMC), and 432-452 (ALMT…SFLF).

This sequence belongs to the SLC29A/ENT transporter (TC 2.A.57) family.

It localises to the apical cell membrane. The protein localises to the basolateral cell membrane. Its subcellular location is the nucleus membrane. It carries out the reaction inosine(in) = inosine(out). The catalysed reaction is adenosine(in) = adenosine(out). The enzyme catalyses uridine(out) = uridine(in). It catalyses the reaction thymidine(in) = thymidine(out). It carries out the reaction hypoxanthine(out) = hypoxanthine(in). The catalysed reaction is adenine(out) = adenine(in). The enzyme catalyses cytidine(in) = cytidine(out). It catalyses the reaction thymine(out) = thymine(in). It carries out the reaction uracil(in) = uracil(out). The catalysed reaction is guanine(out) = guanine(in). The enzyme catalyses guanosine(in) = guanosine(out). Functionally, bidirectional uniporter involved in the facilitative transport of nucleosides and nucleobases, and contributes to maintaining their cellular homeostasis. Functions as a Na(+)-independent, passive transporter. Involved in the transport of nucleosides such as inosine, adenosine, uridine, thymidine, cytidine and guanosine. Also able to transport purine nucleobases (hypoxanthine, adenine, guanine) and pyrimidine nucleobases (thymine, uracil). Involved in nucleoside transport at basolateral membrane of kidney cells, allowing liver absorption of nucleoside metabolites. Mediates apical nucleoside uptake into Sertoli cells, thereby regulating the transport of nucleosides in testis across the blood-testis-barrier. Mediates both the influx and efflux of hypoxanthine in skeletal muscle microvascular endothelial cells to control the amount of intracellular hypoxanthine available for xanthine oxidase-mediated ROS production. This is Equilibrative nucleoside transporter 2 from Mus musculus (Mouse).